A 162-amino-acid chain; its full sequence is 2-C-methyl-D-erythritol 2,4-cyclodiphosphate synthase (162 aa).

A divalent metal cation is bound by residues aspartate 12 and histidine 14. Residues 12–14 (DVH) and 38–39 (HS) contribute to the 4-CDP-2-C-methyl-D-erythritol 2-phosphate site. Histidine 46 lines the a divalent metal cation pocket. 4-CDP-2-C-methyl-D-erythritol 2-phosphate-binding positions include 60–62 (DIG), 65–69 (FPDTD), and arginine 146.

Belongs to the IspF family. Homotrimer. A divalent metal cation is required as a cofactor.

It catalyses the reaction 4-CDP-2-C-methyl-D-erythritol 2-phosphate = 2-C-methyl-D-erythritol 2,4-cyclic diphosphate + CMP. It participates in isoprenoid biosynthesis; isopentenyl diphosphate biosynthesis via DXP pathway; isopentenyl diphosphate from 1-deoxy-D-xylulose 5-phosphate: step 4/6. Involved in the biosynthesis of isopentenyl diphosphate (IPP) and dimethylallyl diphosphate (DMAPP), two major building blocks of isoprenoid compounds. Catalyzes the conversion of 4-diphosphocytidyl-2-C-methyl-D-erythritol 2-phosphate (CDP-ME2P) to 2-C-methyl-D-erythritol 2,4-cyclodiphosphate (ME-CPP) with a corresponding release of cytidine 5-monophosphate (CMP). The protein is 2-C-methyl-D-erythritol 2,4-cyclodiphosphate synthase of Bordetella petrii (strain ATCC BAA-461 / DSM 12804 / CCUG 43448).